Reading from the N-terminus, the 317-residue chain is MAELACFCYPHLENDSYKFIPFNNLAIKCMLTAKVDKKDQDKFYNSIIYGIAPPPQFKKRYNTNDNSRGMNYETSMFNKVAALICEALNSTKVTQSDIASVLSRVVSVRHLENLVLRRENHQDVLFHSKELLLKSVLIAIGHSKEIETTATAEGGEIVFQNTAFTMWRLTYLEHKLMPILDPNFIEYKITVNEGKPISESHIKELIAELRWQYNKFAVITHGKGHYRVVKYSSVANHADRVYATYKSNNKNGNMLEFNLLDQRIIWQNWYAFTSSMKQGNTLDTCKKLLFQKIKRESNPFKGLSTDRKMDEVSQIGI.

Residues 107–109 (SVR), lysine 188, and 221–223 (HGK) each bind ATP. The RNA-binding stretch occupies residues 205–241 (LIAELRWQYNKFAVITHGKGHYRVVKYSSVANHADRV). Residue histidine 225 is the For NTPase and RTPase activities of the active site. Arginine 227 is a binding site for ATP.

This sequence belongs to the rotavirus NSP2 family. Homooctamer. Interacts with VP1; this interaction is weak. Interacts with NSP5; this interaction leads to up-regulation of NSP5 phosphorylation and formation of viral factories. Interacts with host DCP1A, DCP1B, DDX6, EDC4 and EIF2S1/eIF2-alpha; these interactions are probably part of the sequestration of some host SGs and PBs proteins in viral factories. Requires Mg(2+) as cofactor.

The protein resides in the host cytoplasm. In terms of biological role, participates in replication and packaging of the viral genome. Plays a crucial role, together with NSP5, in the formation of virus factories (viroplasms), which are large inclusions in the host cytoplasm where replication intermediates are assembled and viral RNA replication takes place. Displays ssRNA binding, NTPase, RNA triphosphatase (RTPase) and ATP-independent helix-unwinding activities. The unwinding activity may prepare and organize plus-strand RNAs for packaging and replication by removing interfering secondary structures. The RTPase activity plays a role in the removal of the gamma-phosphate from the rotavirus RNA minus strands of dsRNA genome segments. Participates in the selective exclusion of host proteins from stress granules (SG) and P bodies (PB). Also participates in the sequestration of these remodeled organelles in viral factories. The polypeptide is Non-structural protein 2 (Rotavirus A (strain RVA/Human/United States/DS-1/1976/G2P1B[4]) (RV-A)).